The sequence spans 1439 residues: MDTTAAAALPAFVALLLLSPWPLLGSAQGQFSAGGCTFDDGPGACDYHQDLYDDFEWVHVSAQEPHYLPPEMPQGSYMIVDSSDHDPGEKARLQLPTMKENDTHCIDFSYLLYSQKGLNPGTLNILVRVNKGPLANPIWNVTGFTGRDWLRAELAVSTFWPNEYQVIFEAEVSGGRSGYIAIDDIQVLSYPCDKSPHFLRLGDVEVNAGQNATFQCIATGRDAVHNKLWLQRRNGEDIPVAQTKNINHRRFAASFRLQEVTKTDQDLYRCVTQSERGSGVSNFAQLIVREPPRPIAPPQLLGVGPTYLLIQLNANSIIGDGPIILKEVEYRMTSGSWTETHAVNAPTYKLWHLDPDTEYEIRVLLTRPGEGGTGLPGPPLITRTKCAEPMRTPKTLKIAEIQARRIAVDWESLGYNITRCHTFNVTICYHYFRGHNESKADCLDMDPKAPQHVVNHLPPYTNVSLKMILTNPEGRKESEETIIQTDEDVPGPVPVKSLQGTSFENKIFLNWKEPLDPNGIITQYEISYSSIRSFDPAVPVAGPPQTVSNLWNSTHHVFMHLHPGTTYQFFIRASTVKGFGPATAINVTTNISAPTLPDYEGVDASLNETATTITVLLRPAQAKGAPISAYQIVVEELHPHRTKREAGAMECYQVPVTYQNAMSGGAPYYFAAELPPGNLPEPAPFTVGDNRTYQGFWNPPLAPRKGYNIYFQAMSSVEKETKTQCVRIATKAATEEPEVIPDPAKQTDRVVKIAGISAGILVFILLLLVVILIVKKSKLAKKRKDAMGNTRQEMTHMVNAMDRSYADQSTLHAEDPLSITFMDQHNFSPRYENHSATAESSRLLDVPRYLCEGTESPYQTGQLHPAIRVADLLQHINLMKTSDSYGFKEEYESFFEGQSASWDVAKKDQNRAKNRYGNIIAYDHSRVILQPVEDDPSSDYINANYIDGYQRPSHYIATQGPVHETVYDFWRMIWQEQSACIVMVTNLVEVGRVKCYKYWPDDTEVYGDFKVTCVEMEPLAEYVVRTFTLERRGYNEIREVKQFHFTGWPDHGVPYHATGLLSFIRRVKLSNPPSAGPIVVHCSAGAGRTGCYIVIDIMLDMAEREGVVDIYNCVKALRSRRINMVQTEEQYIFIHDAILEACLCGETAIPVCEFKAAYFDMIRIDSQTNSSHLKDEFQTLNSVTPRLQAEDCSIACLPRNHDKNRFMDMLPPDRCLPFLITIDGESSNYINAALMDSYRQPAAFIVTQYPLPNTVKDFWRLVYDYGCTSIVMLNEVDLSQGCPQYWPEEGMLRYGPIQVECMSCSMDCDVINRIFRICNLTRPQEGYLMVQQFQYLGWASHREVPGSKRSFLKLILQVEKWQEECEEGEGRTIIHCLNGGGRSGMFCAIGIVVEMVKRQNVVDVFHAVKTLRNSKPNMVEAPEQYRFCYDVALEYLESS.

Positions 1–26 (MDTTAAAALPAFVALLLLSPWPLLGS) are cleaved as a signal peptide. Residues 27-752 (AQGQFSAGGC…PAKQTDRVVK (726 aa)) lie on the Extracellular side of the membrane. In terms of domain architecture, MAM spans 31–194 (FSAGGCTFDD…IQVLSYPCDK (164 aa)). N-linked (GlcNAc...) asparagine glycans are attached at residues Asn101, Asn140, and Asn211. The Ig-like C2-type domain maps to 196 to 281 (PHFLRLGDVE…TQSERGSGVS (86 aa)). A disulfide bond links Cys216 and Cys270. 4 consecutive Fibronectin type-III domains span residues 294–389 (PIAP…CAEP), 392–488 (TPKT…TDED), 491–595 (GPVP…SAPT), and 597–680 (PDYE…GNLP). Residues Asn416, Asn424, Asn436, Asn462, Asn552, Asn586, Asn590, Asn607, and Asn690 are each glycosylated (N-linked (GlcNAc...) asparagine). Residues 753 to 774 (IAGISAGILVFILLLLVVILIV) traverse the membrane as a helical segment. Topologically, residues 775–1439 (KKSKLAKKRK…DVALEYLESS (665 aa)) are cytoplasmic. Residue Ser856 is modified to Phosphoserine. Tyrosine-protein phosphatase domains follow at residues 887-1141 (FKEE…ILEA) and 1173-1435 (LKDE…ALEY). Substrate-binding positions include Asp1050, 1082–1088 (CSAGAGR), and Gln1126. Cys1082 (phosphocysteine intermediate) is an active-site residue. Cys1376 functions as the Phosphocysteine intermediate in the catalytic mechanism.

Belongs to the protein-tyrosine phosphatase family. Receptor class 2B subfamily. This protein undergoes proteolytic processing. In terms of tissue distribution, high levels in lung, brain and colon; less in liver, pancreas, stomach, kidney, placenta and mammary carcinoma.

It is found in the cell junction. Its subcellular location is the adherens junction. The protein resides in the cell membrane. It catalyses the reaction O-phospho-L-tyrosyl-[protein] + H2O = L-tyrosyl-[protein] + phosphate. In terms of biological role, regulation of processes involving cell contact and adhesion such as growth control, tumor invasion, and metastasis. Negative regulator of EGFR signaling pathway. Forms complexes with beta-catenin and gamma-catenin/plakoglobin. Beta-catenin may be a substrate for the catalytic activity of PTPRK/PTP-kappa. This is Receptor-type tyrosine-protein phosphatase kappa (PTPRK) from Homo sapiens (Human).